We begin with the raw amino-acid sequence, 160 residues long: Cyclic pyranopterin monophosphate synthase (160 aa).

Residues 76-78 (LCH) and 114-115 (ME) each bind substrate. Residue Asp129 is part of the active site.

This sequence belongs to the MoaC family. Homohexamer; trimer of dimers.

It catalyses the reaction (8S)-3',8-cyclo-7,8-dihydroguanosine 5'-triphosphate = cyclic pyranopterin phosphate + diphosphate. It functions in the pathway cofactor biosynthesis; molybdopterin biosynthesis. In terms of biological role, catalyzes the conversion of (8S)-3',8-cyclo-7,8-dihydroguanosine 5'-triphosphate to cyclic pyranopterin monophosphate (cPMP). This chain is Cyclic pyranopterin monophosphate synthase, found in Mesorhizobium japonicum (strain LMG 29417 / CECT 9101 / MAFF 303099) (Mesorhizobium loti (strain MAFF 303099)).